We begin with the raw amino-acid sequence, 368 residues long: MNKDNHHIKVSLTNNPYEIVIGKNSLESIGDELFNIGFREGLKVLVVSNKEVSDHYGDCIIKSLIKSKFKPKLLIIKAGEDQKNQSSIDLIHNAAYEARLERGSLMIALGGGVIGDMTGFAAATWLRGVNVVQIPTTLLAMVDASIGGKTGINHSKGKNLIGAFHQPRLVLIDPKTLISLPSREFKAGMAEIIKYGVISDLELFDLLERQENIADLSNIKEKLLLEIIKRSAKSKAEIVIKDEKESGVRAFLNYGHTFGHVIENLCGYGKWLHGEAVAMGMVAVGQLAVQRGLWNEDNAKRQKRLIEKAGLPSNWPKLDIESVLSSLQGDKKVKNGKVSFVMPLKIGDVKLFNNISNKEIRECLQKIS.

NAD(+) is bound by residues 112–116 (GVIGD), 136–137 (TT), K149, and K158. The Zn(2+) site is built by E191, H256, and H273.

This sequence belongs to the sugar phosphate cyclases superfamily. Dehydroquinate synthase family. Co(2+) serves as cofactor. Requires Zn(2+) as cofactor. The cofactor is NAD(+).

The protein resides in the cytoplasm. It carries out the reaction 7-phospho-2-dehydro-3-deoxy-D-arabino-heptonate = 3-dehydroquinate + phosphate. It participates in metabolic intermediate biosynthesis; chorismate biosynthesis; chorismate from D-erythrose 4-phosphate and phosphoenolpyruvate: step 2/7. Its function is as follows. Catalyzes the conversion of 3-deoxy-D-arabino-heptulosonate 7-phosphate (DAHP) to dehydroquinate (DHQ). This chain is 3-dehydroquinate synthase, found in Prochlorococcus marinus (strain NATL1A).